The chain runs to 117 residues: Large ribosomal subunit protein bL20 (117 aa).

This sequence belongs to the bacterial ribosomal protein bL20 family.

Its function is as follows. Binds directly to 23S ribosomal RNA and is necessary for the in vitro assembly process of the 50S ribosomal subunit. It is not involved in the protein synthesizing functions of that subunit. The chain is Large ribosomal subunit protein bL20 from Rickettsia typhi (strain ATCC VR-144 / Wilmington).